Reading from the N-terminus, the 347-residue chain is MKLAVFSAKSYDKHYFDATLRKHHPALCEITYHSFALSSETVSLAQDSDAVCVFVNDQLDAPVLETLYANGVRAILLRCAGFNNINLQVAEDLGFFVANVPSYSPEAVAEFAVALIQTLNRKTHRAFNRVREGNFNLEGFLGRTLYGKTVGVVGVGRIGLAFAKILHGFGCKLVAYDPFGGEEFKKYGEFVELGDLLAQSDVVSLHCPLTEGTRHVINDENLGRMKKGALLVNTSRGGLVNTKAVINALKSGQLGGVALDVYEEEGALFYNDHSGEIIHDDVLMRLMTFPNVLVCGHQAFFTEEALSEIAGVTLGNLEDFVLKRTCKNSLVREGHLVVPTDKEPVRL.

NAD(+)-binding positions include 157-158 (RI), Asp-177, 234-236 (TSR), and Asp-260. Arg-236 is an active-site residue. Glu-265 is a catalytic residue.

It belongs to the D-isomer specific 2-hydroxyacid dehydrogenase family.

The enzyme catalyses a (2R)-2-hydroxycarboxylate + NADP(+) = a 2-oxocarboxylate + NADPH + H(+). Its function is as follows. 2-hydroxyacid dehydrogenase that is capable to reduce pyruvate, hydroxypyruvate and glyoxylate in a NADPH- or NADH-dependent manner. In contrast to 2-HadhD/morA, does not recognize 4-methyl-2-oxopentanoate (MOA) as a substrate. In Aspergillus oryzae (strain ATCC 42149 / RIB 40) (Yellow koji mold), this protein is 2-hydroxyacid dehydrogenase A.